A 121-amino-acid polypeptide reads, in one-letter code: Small ribosomal subunit protein uS13 (121 aa).

The segment at 94-121 is disordered; the sequence is GLPMRGQRTRTNARTRKGPRKGAAALKK.

Belongs to the universal ribosomal protein uS13 family. As to quaternary structure, part of the 30S ribosomal subunit. Forms a loose heterodimer with protein S19. Forms two bridges to the 50S subunit in the 70S ribosome.

Its function is as follows. Located at the top of the head of the 30S subunit, it contacts several helices of the 16S rRNA. In the 70S ribosome it contacts the 23S rRNA (bridge B1a) and protein L5 of the 50S subunit (bridge B1b), connecting the 2 subunits; these bridges are implicated in subunit movement. Contacts the tRNAs in the A and P-sites. The polypeptide is Small ribosomal subunit protein uS13 (Delftia acidovorans (strain DSM 14801 / SPH-1)).